The primary structure comprises 247 residues: tRNA pseudouridine synthase A (247 aa).

Aspartate 52 functions as the Nucleophile in the catalytic mechanism. Tyrosine 113 lines the substrate pocket.

The protein belongs to the tRNA pseudouridine synthase TruA family. Homodimer.

It carries out the reaction uridine(38/39/40) in tRNA = pseudouridine(38/39/40) in tRNA. In terms of biological role, formation of pseudouridine at positions 38, 39 and 40 in the anticodon stem and loop of transfer RNAs. This is tRNA pseudouridine synthase A from Bartonella quintana (strain Toulouse) (Rochalimaea quintana).